The chain runs to 256 residues: Trans-aconitate 2-methyltransferase (256 aa).

Belongs to the methyltransferase superfamily. Tam family.

It localises to the cytoplasm. It carries out the reaction trans-aconitate + S-adenosyl-L-methionine = (E)-3-(methoxycarbonyl)pent-2-enedioate + S-adenosyl-L-homocysteine. Its function is as follows. Catalyzes the S-adenosylmethionine monomethyl esterification of trans-aconitate. This is Trans-aconitate 2-methyltransferase from Rhodopseudomonas palustris (strain HaA2).